A 334-amino-acid chain; its full sequence is Glycerol-3-phosphate dehydrogenase [NAD(P)+] 2 (334 aa).

Residues W16, R36, R37, and K110 each contribute to the NADPH site. Sn-glycerol 3-phosphate contacts are provided by K110 and G140. Residue A144 coordinates NADPH. Sn-glycerol 3-phosphate-binding residues include K195, D248, S258, R259, and N260. K195 functions as the Proton acceptor in the catalytic mechanism. An NADPH-binding site is contributed by R259. NADPH contacts are provided by V282 and E284.

It belongs to the NAD-dependent glycerol-3-phosphate dehydrogenase family.

Its subcellular location is the cytoplasm. It carries out the reaction sn-glycerol 3-phosphate + NAD(+) = dihydroxyacetone phosphate + NADH + H(+). The catalysed reaction is sn-glycerol 3-phosphate + NADP(+) = dihydroxyacetone phosphate + NADPH + H(+). The protein operates within membrane lipid metabolism; glycerophospholipid metabolism. In terms of biological role, catalyzes the reduction of the glycolytic intermediate dihydroxyacetone phosphate (DHAP) to sn-glycerol 3-phosphate (G3P), the key precursor for phospholipid synthesis. The polypeptide is Glycerol-3-phosphate dehydrogenase [NAD(P)+] 2 (Mycobacterium bovis (strain ATCC BAA-935 / AF2122/97)).